We begin with the raw amino-acid sequence, 382 residues long: Sphingoid long-chain base transporter RSB1 (382 aa).

Topologically, residues 1–34 are extracellular; sequence MSNATNNTLGSLLPQLEAAANSNSLYGGMVPNLR. N-linked (GlcNAc...) asparagine glycosylation is found at N3 and N6. A helical membrane pass occupies residues 35-55; the sequence is FNITMIVIWGILLTIHVVQLL. Residues 56-57 lie on the Cytoplasmic side of the membrane; the sequence is MR. The helical transmembrane segment at 58-78 threads the bilayer; the sequence is QYWFSIAFICTGILEVLGFIG. Residues 79-90 lie on the Extracellular side of the membrane; that stretch reads RTWSHSNVADMD. Residues 91-111 traverse the membrane as a helical segment; that stretch reads AFLLNMICLTIAPVFTMGGIY. Topologically, residues 112-135 are cytoplasmic; sequence YQLAKLIEVYGHRFSLLPSPMAYS. Residues 136–156 form a helical membrane-spanning segment; the sequence is FIFICSDIVSLVVQAVGGGLC. Residues 157-171 are Extracellular-facing; that stretch reads GVAVTDGTSTTTGNH. Residues 172 to 192 traverse the membrane as a helical segment; the sequence is VFIAGLAIQVASMAIFLMLWF. Residues 193-241 lie on the Cytoplasmic side of the membrane; sequence HFLFRIYISVRWEHINSRPISLSLLKISQTEVDYLYREKFHFLRLEPKR. Residues 242-262 form a helical membrane-spanning segment; it reads WVFHYFNLAITVAVLTIFTRC. The Extracellular portion of the chain corresponds to 263–281; it reads CYRLAELVVGWDGYLITHE. The chain crosses the membrane as a helical span at residues 282-302; the sequence is WYFIILDALMMAIATVTLTIF. Residues 303 to 382 are Cytoplasmic-facing; sequence HPGFAFKGRS…LFSSKKKAKL (80 aa).

The protein belongs to the lipid-translocating exporter (LTE) (TC 9.A.26.1) family.

It localises to the cell membrane. Functionally, catalyzes the ATP-dependent translocation of sphingoid long-chain bases (LCBs) from the cytoplasmic site toward the extracytoplasmic side of the membrane (flip-flop). Involved in the establishment of the functional lipid asymmetry of the plasma membrane. Regulates intracellular levels of LCBs, sphingolipid precursors that are growth inhibitory at increased levels. This Saccharomyces cerevisiae (strain ATCC 204508 / S288c) (Baker's yeast) protein is Sphingoid long-chain base transporter RSB1 (RSB1).